An 89-amino-acid chain; its full sequence is Neuropeptide F (89 aa).

A signal peptide spans 1-29 (MASGTFTQRLLVALMIFALIADLSTLVAA). Phenylalanine 61 is modified (phenylalanine amide). A propeptide spanning residues 65–89 (GGYLNPAIFGQDEQEVDWQDSTFSR) is cleaved from the precursor.

It belongs to the NPY family.

It is found in the secreted. Functionally, an integral part of the sensory system that mediates food signaling, providing the neural basis for the regulation of food response; coordinates larval foraging and social behavior changes during development. May have a hormonal role in females. The chain is Neuropeptide F from Anopheles gambiae (African malaria mosquito).